Here is a 78-residue protein sequence, read N- to C-terminus: MKQIFIGIIRFYQKFISPMTPPTCRFYPTCSHYGLEAFQKHGALKGFWLTCKRILKCHPFHPGGFDPVPDKKDDKVNS.

Belongs to the UPF0161 family.

The protein resides in the cell membrane. In terms of biological role, could be involved in insertion of integral membrane proteins into the membrane. This is Putative membrane protein insertion efficiency factor from Bacillus cereus (strain G9842).